Here is a 382-residue protein sequence, read N- to C-terminus: Norsolorinic acid reductase B (382 aa).

Asp-64 lines the NADP(+) pocket. Tyr-69 (proton donor) is an active-site residue. His-143 contributes to the substrate binding site. Residues 173–174 (SD), Gln-199, 228–238 (GVLNQGRFRTE), and 302–310 (RKVDHLTGV) contribute to the NADP(+) site.

This sequence belongs to the aldo/keto reductase family. Aldo/keto reductase 2 subfamily.

It participates in mycotoxin biosynthesis; aflatoxin biosynthesis. In terms of biological role, norsolorinic acid reductase; part of the gene cluster that mediates the biosynthesis of aflatoxins, a group of polyketide-derived furanocoumarins, and part of the most toxic and carcinogenic compounds among the known mycotoxins. The four major aflatoxins produced by A.parasiticus are aflatoxin B1 (AFB1), aflatoxin B2 (AFB2), aflatoxin G1 (AFG1) and aflatoxin G2 (AFG2). Within the aflatoxin pathway, the norsolorinic acid reductase aflE may play a role in the conversion of norsolorinic acid (NOR) to averantin (AVN). The biosynthesis of aflatoxins begins with the norsolorinic acid synthase aflC that combines a hexanoyl starter unit produced by the fatty acid synthase aflA/aflB and 7 malonyl-CoA extender units to synthesize the precursor NOR. The second step is the conversion of NOR to averantin and requires the norsolorinic acid ketoreductase aflD, which catalyzes the dehydration of norsolorinic acid to form (1'S)-averantin. The norsolorinic acid reductases aflE and aflF may also play a role in the conversion of NOR to AVN. The cytochrome P450 monooxygenase aflG then catalyzes the hydroxylation of AVN to 5'hydroxyaverantin (HAVN). The next step is performed by the 5'-hydroxyaverantin dehydrogenase aflH that transforms HAVN to 5'-oxoaverantin (OAVN) which is further converted to averufin (AVF) by aflK that plays a dual role in the pathway, as a 5'-oxoaverantin cyclase that mediates conversion of 5'-oxoaverantin, as well as a versicolorin B synthase in a later step in the pathway. The averufin oxidase aflI catalyzes the conversion of AVF to versiconal hemiacetal acetate (VHA). VHA is then the substrate for the versiconal hemiacetal acetate esterase aflJ to yield versiconal (VAL). Versicolorin B synthase aflK then converts VAL to versicolorin B (VERB) by closing the bisfuran ring of aflatoxin which is required for DNA-binding, thus giving to aflatoxin its activity as a mutagen. Then, the activity of the versicolorin B desaturase aflL leads to versicolorin A (VERA). A branch point starts from VERB since it can also be converted to dihydrodemethylsterigmatocystin (DMDHST), probably also by aflL, VERA being a precursor for aflatoxins B1 and G1, and DMDHST for aflatoxins B2 and G2. Next, the versicolorin reductase aflM and the cytochrome P450 monooxygenase aflN are involved in conversion of VERA to demethylsterigmatocystin (DMST). AflX and aflY seem also involved in this step, through probable aflX-mediated epoxide ring-opening step following versicolorin A oxidation and aflY-mediated Baeyer-Villiger oxidation required for the formation of the xanthone ring. The methyltransferase aflO then leads to the modification of DMST to sterigmatocystin (ST), and of DMDHST to dihydrosterigmatocystin (DHST). Both ST and DHST are then substrates of the O-methyltransferase aflP to yield O-methylsterigmatocystin (OMST) and dihydro-O-methylsterigmatocystin (DHOMST), respectively. Finally OMST is converted to aflatoxins B1 and G1, and DHOMST to aflatoxins B2 and G2, via the action of several enzymes including O-methylsterigmatocystin oxidoreductase aflQ, the cytochrome P450 monooxygenase aflU, but also the NADH-dependent flavin oxidoreductase nadA which is specifically required for the synthesis of AFG1. This is Norsolorinic acid reductase B from Aspergillus parasiticus (strain ATCC 56775 / NRRL 5862 / SRRC 143 / SU-1).